Here is a 581-residue protein sequence, read N- to C-terminus: Frizzled-8 (581 aa).

The signal sequence occupies residues 1–23 (MESLSLSLLLLVSWLQGSQCAAA). In terms of domain architecture, FZ spans 24-144 (KELSCQEITV…GNPDTLCMDY (121 aa)). Over 24–239 (KELSCQEITV…PEERTFTEFW (216 aa)) the chain is Extracellular. 5 cysteine pairs are disulfide-bonded: Cys-28–Cys-89, Cys-36–Cys-82, Cys-73–Cys-111, Cys-100–Cys-141, and Cys-104–Cys-128. A glycan (N-linked (GlcNAc...) asparagine) is linked at Asn-42. 64–71 (QFWPLVVI) provides a ligand contact to hexadecanoate. The segment at 88 to 93 (ICLEDY) is wnt-binding. Residues 140–146 (LCMDYYN) are wnt-binding. Asn-146 carries N-linked (GlcNAc...) asparagine glycosylation. The tract at residues 151–189 (TTAAPSHPEPPKPPARSVPKGRTRVEPPRSRSRATGCES) is disordered. Over residues 157–166 (HPEPPKPPAR) the composition is skewed to pro residues. Residues 240–260 (IGLWSVLCFASTFATVSTFLI) form a helical membrane-spanning segment. Residues 261 to 271 (DMERFKYPERP) lie on the Cytoplasmic side of the membrane. A helical transmembrane segment spans residues 272–292 (IIFLSACYLLVSTGYLIRLIA). The Extracellular portion of the chain corresponds to 293–320 (GHEKVACSRGELDLEHIIHYETTGPALC). The helical transmembrane segment at 321–341 (TLVFLLIYFFGMASSIWWVIL) threads the bilayer. Residues 342-377 (SLTWFLAAGMKWGNEAIAGYSQYFHLAAWLVPSIKS) are Cytoplasmic-facing. Residues 378 to 398 (IAVLALSSVDGDPVAGICFVG) form a helical membrane-spanning segment. The Extracellular segment spans residues 399–407 (NQNLDNLRG). A helical transmembrane segment spans residues 408–428 (FVLAPLVIYLFIGSMFLLAGF). The Cytoplasmic portion of the chain corresponds to 429 to 454 (VSLFRIRSVIKQGGTKTDKLEKLMIR). The chain crosses the membrane as a helical span at residues 455-475 (IGIFSVLYTVPATIVVACFFY). Residues 476–505 (EQHNRQGWEVAHNCNSCQPEMAQPHRPDYA) are Extracellular-facing. Residues 506 to 526 (VFMLKYFMCLVVGITSGVWIW) traverse the membrane as a helical segment. Residues 527–581 (SGKTLESWRAFCTRCCWGSKATGGSMYSDVSTGLTWRSGTGSSVSCPKQMPLSQV) lie on the Cytoplasmic side of the membrane. Positions 529 to 534 (KTLESW) match the Lys-Thr-X-X-X-Trp motif, mediates interaction with the PDZ domain of Dvl family members motif. The PDZ-binding signature appears at 579–581 (SQV).

It belongs to the G-protein coupled receptor Fz/Smo family. In terms of assembly, interacts with lypd6 and the interaction is strongly enhanced by wnt3a.

Its subcellular location is the membrane. The protein localises to the cell membrane. In terms of biological role, receptor for Wnt proteins. Most of frizzled receptors are coupled to the beta-catenin canonical signaling pathway, which leads to the activation of disheveled proteins, inhibition of GSK-3 kinase, nuclear accumulation of beta-catenin and activation of Wnt target genes. A second signaling pathway involving PKC and calcium fluxes has been seen for some family members, but it is not yet clear if it represents a distinct pathway or if it can be integrated in the canonical pathway, as PKC seems to be required for Wnt-mediated inactivation of GSK-3 kinase. Both pathways seem to involve interactions with G-proteins. May be involved in transduction and intercellular transmission of polarity information during tissue morphogenesis and/or in differentiated tissues. Activation by Wnt8, Wnt5A or Wnt3A induces expression of beta-catenin target genes. Displays an axis-inducing activity. The protein is Frizzled-8 (fzd8) of Xenopus laevis (African clawed frog).